Here is a 341-residue protein sequence, read N- to C-terminus: Cysteine-rich repeat secretory protein 1 (341 aa).

A signal peptide spans 1-25; the sequence is MFSLPLHQSKLIFLLSFLLIKTLNA. 2 consecutive Gnk2-homologous domains span residues 28-131 and 136-245; these read TYLL…SRKI and DQGP…ATFL. 4 disulfide bridges follow: C85–C94, C97–C122, C199–C208, and C211–C236. Over residues 247–262 the composition is skewed to pro residues; that stretch reads PPPPPPPPPPPPPPPQ. Residues 247–274 are disordered; the sequence is PPPPPPPPPPPPPPPQRLYGENDTPSSD.

It belongs to the cysteine-rich repeat secretory protein family.

The protein localises to the secreted. The polypeptide is Cysteine-rich repeat secretory protein 1 (CRRSP1) (Arabidopsis thaliana (Mouse-ear cress)).